The chain runs to 74 residues: Large ribosomal subunit protein bL28 (74 aa).

This sequence belongs to the bacterial ribosomal protein bL28 family.

In Buchnera aphidicola subsp. Baizongia pistaciae (strain Bp), this protein is Large ribosomal subunit protein bL28.